The chain runs to 307 residues: Mitochondrial brown fat uncoupling protein 1 (307 aa).

Residues 1 to 10 are Mitochondrial intermembrane-facing; that stretch reads MVSSTTSEVQ. A helical membrane pass occupies residues 11 to 32; the sequence is PTMGVKIFSAGVSACLADIITF. Solcar repeat units lie at residues 11 to 102, 111 to 201, and 210 to 295; these read PTMG…VQEY, ASLG…MKGA, and DDVP…LKKE. Over 33–73 the chain is Mitochondrial matrix; it reads PLDTAKVRLQIQGEGQASSTIRYKGVLGTITTLAKTEGLPK. K56 contributes to the fatty acid 16:0 binding site. A helical transmembrane segment spans residues 74–96; it reads LYSGLPAGIQRQISFASLRIGLY. The Mitochondrial intermembrane portion of the chain corresponds to 97–116; that stretch reads DTVQEYFSSGRETPASLGSK. The helical transmembrane segment at 117–133 threads the bilayer; that stretch reads ISAGLMTGGVAVFIGQP. At 134 to 178 the chain is on the mitochondrial matrix side; that stretch reads TEVVKVRMQAQSHLHGIKPRYTGTYNAYRVIATTESLSTLWKGTT. A helical membrane pass occupies residues 179 to 195; that stretch reads PNLMRNVIINCTELVTY. Residues 196 to 212 are Mitochondrial intermembrane-facing; sequence DLMKGALVNHHILADDV. A helical transmembrane segment spans residues 213 to 232; the sequence is PCHLLSALVAGFCTTLLASP. Topologically, residues 233–266 are mitochondrial matrix; the sequence is VDVVKTRFINSLPGQYPSVPSCAMTMYTKEGPAA. C254 carries the post-translational modification Cysteine sulfenic acid (-SOH). The helical transmembrane segment at 267 to 289 threads the bilayer; sequence FFKGFAPSFLRLGSWNVIMFVCF. K269 is a fatty acid 16:0 binding site. The Mitochondrial intermembrane segment spans residues 290–307; it reads EQLKKELMKSRQTVDCTT.

It belongs to the mitochondrial carrier (TC 2.A.29) family. As to quaternary structure, most probably functions as a monomer. Binds one purine nucleotide per monomer. However, has also been suggested to function as a homodimer or a homotetramer. Tightly associates with cardiolipin in the mitochondrion inner membrane; may stabilize and regulate its activity. In terms of processing, may undergo ubiquitin-mediated proteasomal degradation. Post-translationally, may undergo sulfenylation upon cold exposure. May increase the sensitivity of UCP1 thermogenic function to the activation by noradrenaline probably through structural effects. Brown adipose tissue.

The protein localises to the mitochondrion inner membrane. The catalysed reaction is H(+)(in) = H(+)(out). Has no constitutive proton transporter activity and has to be activated by long-chain fatty acids/LCFAs. Inhibited by purine nucleotides. Both purine nucleotides and LCFAs bind the cytosolic side of the transporter and directly compete to activate or inhibit it. Activated by noradrenaline and reactive oxygen species. Despite lacking canonical translational encoding for selenocysteine, a small pool of the protein has been observed to selectively incorporate selenocysteine at 'Cys-254'. Selenocysteine-modified protein is highly sensitive to redox modification and may constitute a pool of protein highly sensitive to activation by elevated levels of reactive oxygen species (ROS). Mitochondrial protein responsible for thermogenic respiration, a specialized capacity of brown adipose tissue and beige fat that participates in non-shivering adaptive thermogenesis to temperature and diet variations and more generally to the regulation of energy balance. Functions as a long-chain fatty acid/LCFA and proton symporter, simultaneously transporting one LCFA and one proton through the inner mitochondrial membrane. However, LCFAs remaining associated with the transporter via their hydrophobic tails, it results in an apparent transport of protons activated by LCFAs. Thereby, dissipates the mitochondrial proton gradient and converts the energy of substrate oxydation into heat instead of ATP. Regulates the production of reactive oxygen species/ROS by mitochondria. The sequence is that of Mitochondrial brown fat uncoupling protein 1 from Rattus norvegicus (Rat).